Consider the following 364-residue polypeptide: Dihydroorotate dehydrogenase (quinone) (364 aa).

FMN contacts are provided by residues 78–82 (AGFDK) and threonine 102. Lysine 82 contacts substrate. Residue 127–131 (NRMGF) participates in substrate binding. 2 residues coordinate FMN: asparagine 156 and asparagine 189. Asparagine 189 is a substrate binding site. Serine 192 serves as the catalytic Nucleophile. Asparagine 194 provides a ligand contact to substrate. FMN-binding residues include lysine 227 and threonine 255. 256-257 (NT) provides a ligand contact to substrate. FMN is bound by residues glycine 285, glycine 314, and 335-336 (YT).

It belongs to the dihydroorotate dehydrogenase family. Type 2 subfamily. As to quaternary structure, monomer. It depends on FMN as a cofactor.

The protein localises to the cell membrane. The enzyme catalyses (S)-dihydroorotate + a quinone = orotate + a quinol. It functions in the pathway pyrimidine metabolism; UMP biosynthesis via de novo pathway; orotate from (S)-dihydroorotate (quinone route): step 1/1. Functionally, catalyzes the conversion of dihydroorotate to orotate with quinone as electron acceptor. The sequence is that of Dihydroorotate dehydrogenase (quinone) from Thermosynechococcus vestitus (strain NIES-2133 / IAM M-273 / BP-1).